We begin with the raw amino-acid sequence, 399 residues long: Nuclear hormone receptor family member nhr-125 (399 aa).

Positions 10 to 80 form a DNA-binding region, nuclear receptor; the sequence is PFSCRICNQK…MGMDTTKFQY (71 aa). 2 NR C4-type zinc fingers span residues 13-33 and 50-63; these read CRIC…CRAC and CQKG…CKRC. The NR LBD domain maps to 149 to 392; sequence QLENLTEGFK…EKLQKSQFSI (244 aa).

This sequence belongs to the nuclear hormone receptor family.

The protein localises to the nucleus. Orphan nuclear receptor. This chain is Nuclear hormone receptor family member nhr-125 (nhr-125), found in Caenorhabditis elegans.